The following is a 316-amino-acid chain: Palmitoyltransferase ZDHHC3-A (316 aa).

Residues 1 to 45 (MRSPVPRFRDVERQASGLQPPQCLPSCHERQSSMWFIKDACGIVC) are Cytoplasmic-facing. The chain crosses the membrane as a helical span at residues 46–66 (AIITWFLVFFAEFVVLFVMLI). Topologically, residues 67–70 (PSKN) are lumenal. Residues 71–91 (LTYSLVNGTLFNSLAFLALAS) traverse the membrane as a helical segment. The Cytoplasmic segment spans residues 92 to 169 (HFRAMCTDPG…NCVGENNQKY (78 aa)). Residues 124 to 175 (VYKCPKCCSIKPDRAHHCSVCKRCIRKMDHHCPWVNNCVGENNQKYFVLFTM) form the DHHC domain. Cys-144 is lipidated: S-palmitoyl cysteine. The active-site S-palmitoyl cysteine intermediate is the Cys-155. The helical transmembrane segment at 170–190 (FVLFTMYICLISLHSLVMVVF) threads the bilayer. Topologically, residues 191–212 (HFLNCFEDDWTKCSTFSPPATV) are lumenal. A helical membrane pass occupies residues 213–233 (ILLILLCFEGLLFLIFTSVMF). The Cytoplasmic portion of the chain corresponds to 234 to 316 (GTQVHSICTD…DVIEIPLEPH (83 aa)).

This sequence belongs to the DHHC palmitoyltransferase family. In terms of assembly, monomer. Homooligomers. The monomeric form has a higher catalytic activity. Forms heterooligomers with zdhhc7. Post-translationally, autopalmitoylated.

It is found in the golgi apparatus membrane. It carries out the reaction L-cysteinyl-[protein] + hexadecanoyl-CoA = S-hexadecanoyl-L-cysteinyl-[protein] + CoA. It catalyses the reaction L-cysteinyl-[protein] + tetradecanoyl-CoA = S-tetradecanoyl-L-cysteinyl-[protein] + CoA. The catalysed reaction is L-cysteinyl-[protein] + octadecanoyl-CoA = S-octadecanoyl-L-cysteinyl-[protein] + CoA. Its function is as follows. Golgi-localized palmitoyltransferase that catalyzes the addition of palmitate onto various protein substrates and regulates their association with membranes. Has no stringent fatty acid selectivity and in addition to palmitate can also transfer onto target proteins myristate from tetradecanoyl-CoA and stearate from octadecanoyl-CoA. The chain is Palmitoyltransferase ZDHHC3-A (zdhhc3a) from Danio rerio (Zebrafish).